The following is a 229-amino-acid chain: Adenylate kinase 1 (229 aa).

Gly-42–Thr-47 is an ATP binding site. A Phosphoserine modification is found at Ser-62. AMP-binding positions include Ser-63, Arg-68, Gly-118–Arg-121, and Gln-125. Arg-156 provides a ligand contact to ATP. 2 residues coordinate AMP: Arg-164 and Arg-175.

Belongs to the adenylate kinase family. AK1 subfamily. High expression levels in the thorax, suggesting a possible function in the gastrointestinal or reproductive systems.

It is found in the cytoplasm. The enzyme catalyses AMP + ATP = 2 ADP. Functionally, catalyzes the reversible transfer of the terminal phosphate group between ATP and AMP. Plays an important role in cellular energy homeostasis and in adenine nucleotide metabolism. The protein is Adenylate kinase 1 of Drosophila melanogaster (Fruit fly).